We begin with the raw amino-acid sequence, 49 residues long: Light-harvesting protein B800/850/890 alpha-3 chain (49 aa).

Residues 1–14 (MNQARIWLVVKPSV) lie on the Cytoplasmic side of the membrane. A helical transmembrane segment spans residues 15–35 (GLPLLLGVVLLIALLVHGAIL). Position 31 (H31) interacts with a bacteriochlorophyll. The Periplasmic segment spans residues 36 to 49 (TNTSWYPTYFEGNW).

This sequence belongs to the antenna complex alpha subunit family. As to quaternary structure, the core complex is formed by different alpha and beta chains, binding bacteriochlorophyll molecules, and arranged most probably in tetrameric structures disposed around the reaction center. The non-pigmented gamma chains may constitute additional components.

Its subcellular location is the cell inner membrane. In terms of biological role, antenna complexes are light-harvesting systems, which transfer the excitation energy to the reaction centers. The protein is Light-harvesting protein B800/850/890 alpha-3 chain of Halorhodospira halophila (strain DSM 244 / SL1) (Ectothiorhodospira halophila (strain DSM 244 / SL1)).